We begin with the raw amino-acid sequence, 238 residues long: SPEG neighbor protein (238 aa).

Residues 29–55 (QSAAIRIQASYRGHRSRKELREKGPPR) form the IQ domain. Ig-like domains are found at residues 54 to 143 (PRVL…ARIL) and 147 to 236 (PTKI…ARVD).

This is SPEG neighbor protein from Homo sapiens (Human).